A 233-amino-acid polypeptide reads, in one-letter code: Ion-translocating oxidoreductase complex subunit E (233 aa).

The next 6 helical transmembrane spans lie at 18-38 (ALVQLLGLCPLLAVSSTATNA), 39-59 (LGLGLATTLVLVCTNTAVSAL), 69-89 (IPIYVMIIASVVSTVQMLINA), 92-112 (FGLYQSLGIFIPLIVTNCIVI), 128-148 (ALDGFAMGMGATCALFVLGAL), and 182-202 (PFLLAMLPPGAFIGLGLLLAG).

Belongs to the NqrDE/RnfAE family. The complex is composed of six subunits: RnfA, RnfB, RnfC, RnfD, RnfE and RnfG.

The protein localises to the cell inner membrane. Functionally, part of a membrane-bound complex that couples electron transfer with translocation of ions across the membrane. The chain is Ion-translocating oxidoreductase complex subunit E from Yersinia pestis bv. Antiqua (strain Angola).